A 195-amino-acid polypeptide reads, in one-letter code: Putative EGF-like and EMI domain-containing protein 1 (195 aa).

The EGF-like domain maps to 86-97 (CTCKSGYQGNRC).

This chain is Putative EGF-like and EMI domain-containing protein 1 (EGFEM1P), found in Homo sapiens (Human).